The chain runs to 587 residues: Proteasome-associated ATPase (587 aa).

Residues 9-94 are a coiled coil; sequence ARKAQHDAEI…KEEVDRLAQP (86 aa). Residue 276–281 participates in ATP binding; the sequence is GCGKTL. The tract at residues 586-587 is docks into pockets in the proteasome alpha-ring; that stretch reads YL.

This sequence belongs to the AAA ATPase family. In terms of assembly, homohexamer. Assembles into a hexameric ring structure that caps the 20S proteasome core. Strongly interacts with the prokaryotic ubiquitin-like protein Pup through a hydrophobic interface; the interacting region of ARC lies in its N-terminal coiled-coil domain. There is one Pup binding site per ARC hexamer ring. Upon ATP-binding, the C-terminus of ARC interacts with the alpha-rings of the proteasome core, possibly by binding to the intersubunit pockets.

It functions in the pathway protein degradation; proteasomal Pup-dependent pathway. Functionally, ATPase which is responsible for recognizing, binding, unfolding and translocation of pupylated proteins into the bacterial 20S proteasome core particle. May be essential for opening the gate of the 20S proteasome via an interaction with its C-terminus, thereby allowing substrate entry and access to the site of proteolysis. Thus, the C-termini of the proteasomal ATPase may function like a 'key in a lock' to induce gate opening and therefore regulate proteolysis. The protein is Proteasome-associated ATPase of Thermomonospora curvata (strain ATCC 19995 / DSM 43183 / JCM 3096 / KCTC 9072 / NBRC 15933 / NCIMB 10081 / Henssen B9).